Consider the following 206-residue polypeptide: LexA repressor (206 aa).

Residues 28–48 (RAEIARRLGFKSANAAEEHLK) constitute a DNA-binding region (H-T-H motif). Catalysis depends on for autocatalytic cleavage activity residues Ser123 and Lys160.

This sequence belongs to the peptidase S24 family. Homodimer.

It carries out the reaction Hydrolysis of Ala-|-Gly bond in repressor LexA.. Its function is as follows. Represses a number of genes involved in the response to DNA damage (SOS response), including recA and lexA. In the presence of single-stranded DNA, RecA interacts with LexA causing an autocatalytic cleavage which disrupts the DNA-binding part of LexA, leading to derepression of the SOS regulon and eventually DNA repair. In Shewanella pealeana (strain ATCC 700345 / ANG-SQ1), this protein is LexA repressor.